The chain runs to 147 residues: Hemoglobin subunit gamma-2 (147 aa).

One can recognise a Globin domain in the interval 3 to 147 (HFTEEDKATI…VASALSSRYH (145 aa)). At threonine 13 the chain carries Phosphothreonine. 3 positions are modified to phosphoserine: serine 45, serine 51, and serine 53. Residue lysine 60 is modified to N6-acetyllysine. Histidine 64 is a heme b binding site. An N6-acetyllysine modification is found at lysine 83. Position 93 (histidine 93) interacts with heme b. An S-nitrosocysteine modification is found at cysteine 94. Phosphoserine is present on residues serine 140, serine 143, and serine 144.

Belongs to the globin family. As to quaternary structure, heterotetramer of two alpha chains and two gamma chains in fetal hemoglobin (Hb F). In terms of tissue distribution, red blood cells.

Functionally, gamma chains make up the fetal hemoglobin F, in combination with alpha chains. The sequence is that of Hemoglobin subunit gamma-2 (HBG2) from Hylobates lar (Lar gibbon).